The sequence spans 364 residues: 3-dehydroquinate synthase (364 aa).

NAD(+)-binding positions include 75–80 (DGEQYK), 109–113 (GVIGD), 133–134 (TT), lysine 146, lysine 155, and 173–176 (TLDT). 3 residues coordinate Zn(2+): glutamate 188, histidine 251, and histidine 268.

It belongs to the sugar phosphate cyclases superfamily. Dehydroquinate synthase family. The cofactor is Co(2+). It depends on Zn(2+) as a cofactor. Requires NAD(+) as cofactor.

The protein resides in the cytoplasm. The catalysed reaction is 7-phospho-2-dehydro-3-deoxy-D-arabino-heptonate = 3-dehydroquinate + phosphate. Its pathway is metabolic intermediate biosynthesis; chorismate biosynthesis; chorismate from D-erythrose 4-phosphate and phosphoenolpyruvate: step 2/7. Catalyzes the conversion of 3-deoxy-D-arabino-heptulosonate 7-phosphate (DAHP) to dehydroquinate (DHQ). In Dechloromonas aromatica (strain RCB), this protein is 3-dehydroquinate synthase.